An 862-amino-acid chain; its full sequence is Protein argonaute-2 (862 aa).

The region spanning 232-351 is the PAZ domain; sequence PVIEFMCEVL…LPLEVCNIVA (120 aa). Interaction with guide RNA stretches follow at residues 314 to 319 and 527 to 569; these read YFKDRH and GKTP…LCLK. Residues 520–821 enclose the Piwi domain; that stretch reads LVVVILPGKT…VAFRARYHLV (302 aa). An interaction with GW182 family members region spans residues 590 to 593; sequence FQQP. Asp-600 is an a divalent metal cation binding site. The tract at residues 653–663 is interaction with GW182 family members; the sequence is LIQFYKSTRFK. Asp-672 lines the a divalent metal cation pocket. Interaction with guide RNA regions lie at residues 712–713, 756–764, and 793–815; these read KR, HAGIQGTSR, and YVRC…VAFR. His-810 contributes to the a divalent metal cation binding site. Residues 825–847 form a disordered region; that stretch reads HDSAEGSHTSGQSNGRDQQALAK. Positions 830–841 are enriched in polar residues; sequence GSHTSGQSNGRD.

It belongs to the argonaute family. Ago subfamily. In terms of assembly, component of the RISC loading complex (RLC), or micro-RNA (miRNA) loading complex (miRLC), which is composed of dicer1, ago2 and tarbp2. Note that the trimeric RLC/miRLC is also referred to as RISC. Mg(2+) is required as a cofactor. Requires Mn(2+) as cofactor.

Its subcellular location is the cytoplasm. It is found in the P-body. It catalyses the reaction Endonucleolytic cleavage to 5'-phosphomonoester.. Required for RNA-mediated gene silencing (RNAi) by the RNA-induced silencing complex (RISC). The 'minimal RISC' appears to include ago2 bound to a short guide RNA such as a microRNA (miRNA) or short interfering RNA (siRNA). These guide RNAs direct RISC to complementary mRNAs that are targets for RISC-mediated gene silencing. The precise mechanism of gene silencing depends on the degree of complementarity between the miRNA or siRNA and its target. Binding of RISC to a perfectly complementary mRNA generally results in silencing due to endonucleolytic cleavage of the mRNA specifically by ago2. Binding of RISC to a partially complementary mRNA results in silencing through inhibition of translation, and this is independent of endonuclease activity. The inhibition of translational initiation leads to the accumulation of the affected mRNA in cytoplasmic processing bodies (P-bodies), where mRNA degradation may subsequently occur. The sequence is that of Protein argonaute-2 (ago2) from Xenopus laevis (African clawed frog).